The primary structure comprises 904 residues: Protein abrupt (904 aa).

Residues 1–15 (MTESTQLQTAENNNA) are compositionally biased toward polar residues. 2 disordered regions span residues 1-30 (MTES…TSSV) and 53-72 (GSAL…HQQQ). In terms of domain architecture, BTB spans 103–168 (VDVTLACDER…MYNGEVNVSH (66 aa)). The span at 204-238 (SHNSSNNNNNNSSSNNSLSNNNNNNNNNAESSNHN) shows a compositional bias: low complexity. 4 disordered regions span residues 204-287 (SHNS…LNSP), 349-390 (ASSA…PPPQ), 411-438 (LLDR…KDRE), and 451-501 (ALEN…NQRS). A compositionally biased stretch (polar residues) spans 239–253 (KISSYLSPNQTSAAC). Residues 254-286 (NNSSNSNSNNHSSSHNNSSSNNISGSLNSSLNS) show a composition bias toward low complexity. Basic and acidic residues predominate over residues 429 to 438 (SGRDTSKDRE). Residues 452 to 461 (LENSNGQQAN) show a composition bias toward polar residues. The residue at position 474 (S474) is a Phosphoserine. Basic and acidic residues predominate over residues 481–500 (PSDRGDGQHDGTLDGIDNQR). 2 consecutive C2H2-type zinc fingers follow at residues 544–567 (RPCP…EDKH) and 573–596 (YRCV…SRQH). 2 disordered regions span residues 633–696 (ELRA…GGSS) and 832–904 (AAGN…VHNT). Positions 642–655 (GGSGSSGGGGGGGS) are enriched in gly residues. The segment covering 671–682 (DDAEDSDDDPED) has biased composition (acidic residues). A phosphoserine mark is found at S837, S846, and S868. Positions 851–868 (MGHDEMAENDGDMRREGS) are enriched in basic and acidic residues. Residues 876 to 886 (DNNQSGSNHEV) are compositionally biased toward polar residues. 2 positions are modified to phosphoserine: S889 and S896.

In terms of tissue distribution, expressed in CNS midline cells during embryonic stages 9-13. Expression also seen in cells of the stomagastric nervous system. Segmentally repeated stripes of ectodermal expression appear at stage 11 that become uniform by stage 12 and throughout embryogenesis. Expressed at variable levels in somatic muscles from stage 16 and in all imaginal disks during larval development. Expression is seen in da neurons that grow in two-dimensional dendrites underneath the epidermis during late embryonic, larval, and pupal stages.

The protein resides in the nucleus. Functionally, expression is vital for development; may be involved in transcriptional regulation. In embryos, muscle specific expression is required for segmental nerve b (SNb) motoneuron target recognition within ventral longitudinal muscles. Has a role in establishing and maintaining embryonic muscle attachments, adult sensory cell formation (macrochaetae) and morphogenesis of adult appendages (legs, antenna aristae and male external genitalia). Has a role in the morphogenesis of the class I dendritic neurons: selective expression of ab in class I da neurons plays a pivotal role in forming dendritic arbors, which are characteristic of the class I cells. The development of more complex arbors of class II-IV neurons depends on the absence of ab. In Drosophila melanogaster (Fruit fly), this protein is Protein abrupt (ab).